The following is a 387-amino-acid chain: MATVIPGPLSLGEDFYREAIEHCRSYNARLCAERSLRLPFLDSQTGVAQNNCYIWMEKTHRGPGLAPGQIYTYPARCWRKKRRLNILEDPRLRPCEYKIDCEAPLKKEGGLPEGPVLEALLCAETGEKKIELKEEETIMDCQKQQLLEFPHDLEVEDLEDDIPRRKNRAKGKAYGIGGLRKRQDTASLEDRDKPYVCDICGKRYKNRPGLSYHYTHTHLAEEEGEENAERHALPFHRKNNHKQFYKELAWVPEAQRKHTAKKAPDGTVIPNGYCDFCLGGSKKTGCPEDLISCADCGRSGHPSCLQFTVNMTAAVRTYRWQCIECKSCSLCGTSENDDQLLFCDDCDRGYHMYCLSPPMAEPPEGSWSCHLCLRHLKEKASAYITLT.

Glycyl lysine isopeptide (Lys-Gly) (interchain with G-Cter in SUMO2) cross-links involve residues Lys106, Lys129, and Lys133. A C2H2-type zinc finger spans residues 195 to 218 (YVCDICGKRYKNRPGLSYHYTHTH). 2 consecutive PHD-type zinc fingers follow at residues 271-328 (NGYC…CKSC) and 325-375 (CKSC…CLRH). Zn(2+) contacts are provided by Cys274, Cys277, Cys293, Cys296, His301, Cys304, Cys322, Cys325, Cys328, Cys331, Cys343, Cys346, His351, Cys354, Cys369, and Cys372.

Belongs to the requiem/DPF family. Component of neuron-specific chromatin remodeling complex (nBAF complex) composed of at least, ARID1A/BAF250A or ARID1B/BAF250B, SMARCD1/BAF60A, SMARCD3/BAF60C, SMARCA2/BRM/BAF190B, SMARCA4/BRG1/BAF190A, SMARCB1/BAF47, SMARCC1/BAF155, SMARCE1/BAF57, SMARCC2/BAF170, DPF1/BAF45B, DPF3/BAF45C, ACTL6B/BAF53B and actin.

The protein resides in the cytoplasm. It is found in the nucleus. Its function is as follows. May have an important role in developing neurons by participating in regulation of cell survival, possibly as a neurospecific transcription factor. Belongs to the neuron-specific chromatin remodeling complex (nBAF complex). During neural development a switch from a stem/progenitor to a postmitotic chromatin remodeling mechanism occurs as neurons exit the cell cycle and become committed to their adult state. The transition from proliferating neural stem/progenitor cells to postmitotic neurons requires a switch in subunit composition of the npBAF and nBAF complexes. As neural progenitors exit mitosis and differentiate into neurons, npBAF complexes which contain ACTL6A/BAF53A and PHF10/BAF45A, are exchanged for homologous alternative ACTL6B/BAF53B and DPF1/BAF45B or DPF3/BAF45C subunits in neuron-specific complexes (nBAF). The npBAF complex is essential for the self-renewal/proliferative capacity of the multipotent neural stem cells. The nBAF complex along with CREST plays a role regulating the activity of genes essential for dendrite growth. This chain is Zinc finger protein neuro-d4, found in Homo sapiens (Human).